We begin with the raw amino-acid sequence, 668 residues long: MATRRELANAIRFLSMDAVQKAKSGHPGAPMGMADIAEVLWRDFLKHNPSNPHWADRDRFILSNGHGSMLIYSLLHLSGYDLSIEDLKQFRQLHSKTPGHPEYGYAPGVETTTGPLGQGITNAVGFAIAEKTLAHQFNRPGHEIVDHHTYVFLGDGCLMEGISHEACSLAGTLGLGKLIAFYDDNNISIDGHVDGWFTDDTQKRFEAYGWHVIPAVDGHNPEQILEAVKQAQAETTKPTLIICKTIIGYGSPNKANSHDCHGAPLGDDEIAAAREFLKWEHAPFEIPAEIYAQWDAKEKGQVAEKAWEEKLAAYAKAYPELAAEFTRRVNAELPANWAAESQAFIEHLQANPANIASRKASQNAIEAYAKLLPEFLGGSADLASSNLTLWSGSKPIRAVENADGNYINYGVREFGMSAIMNGIALHGGFIPYGATFLMFMEYAHNAVRMAALMKQRSLFVYTHDSIGLGEDGPTHQPVEQTSALRLIPNLETWRPCDQVESAVAWKAAVERKEGPSALIFTRQNLAQMDRTAEQLANVARGGYVLRHCCENQNCPDLILIATGSEVELAMKAADVLDAEGVKVRVVSMPSTNVFDKQDAAYRESVLPSHITKRVAIEAGIADFWYKYVGFEGRVVGMNSFGESAPADQLFKLFGFTVENIVEKAKAIL.

Substrate is bound at residue histidine 26. Thiamine diphosphate contacts are provided by residues histidine 66 and 114–116; that span reads GPL. A Mg(2+)-binding site is contributed by aspartate 155. Residues glycine 156 and asparagine 185 each coordinate thiamine diphosphate. Residues asparagine 185 and isoleucine 187 each coordinate Mg(2+). Residues histidine 261, arginine 358, and serine 385 each coordinate substrate. Histidine 261 is a thiamine diphosphate binding site. Glutamate 413 acts as the Proton donor in catalysis. Phenylalanine 439 contributes to the thiamine diphosphate binding site. Residues histidine 463, aspartate 471, and arginine 522 each coordinate substrate.

The protein belongs to the transketolase family. Homodimer. Mg(2+) serves as cofactor. Ca(2+) is required as a cofactor. It depends on Mn(2+) as a cofactor. Requires Co(2+) as cofactor. The cofactor is thiamine diphosphate.

The enzyme catalyses D-sedoheptulose 7-phosphate + D-glyceraldehyde 3-phosphate = aldehydo-D-ribose 5-phosphate + D-xylulose 5-phosphate. Catalyzes the transfer of a two-carbon ketol group from a ketose donor to an aldose acceptor, via a covalent intermediate with the cofactor thiamine pyrophosphate. This is Transketolase 1 (tktA) from Pasteurella multocida (strain Pm70).